A 314-amino-acid polypeptide reads, in one-letter code: Aspartate carbamoyltransferase catalytic subunit (314 aa).

Positions 58 and 59 each coordinate carbamoyl phosphate. Lys86 lines the L-aspartate pocket. 3 residues coordinate carbamoyl phosphate: Arg108, His136, and Gln139. Residues Arg169 and Arg223 each coordinate L-aspartate. Residues Gly264 and Pro265 each contribute to the carbamoyl phosphate site.

Belongs to the aspartate/ornithine carbamoyltransferase superfamily. ATCase family. Heterododecamer (2C3:3R2) of six catalytic PyrB chains organized as two trimers (C3), and six regulatory PyrI chains organized as three dimers (R2).

It catalyses the reaction carbamoyl phosphate + L-aspartate = N-carbamoyl-L-aspartate + phosphate + H(+). Its pathway is pyrimidine metabolism; UMP biosynthesis via de novo pathway; (S)-dihydroorotate from bicarbonate: step 2/3. Functionally, catalyzes the condensation of carbamoyl phosphate and aspartate to form carbamoyl aspartate and inorganic phosphate, the committed step in the de novo pyrimidine nucleotide biosynthesis pathway. The sequence is that of Aspartate carbamoyltransferase catalytic subunit from Jannaschia sp. (strain CCS1).